The following is a 161-amino-acid chain: Bacterial E2-like ubiquitin protein BilB (161 aa).

The active-site Glycyl thioester intermediate is Cys113.

Its function is as follows. Component of the Bil (bacterial ISG15-like) antiviral defense system, composed of BilA, BilB, BilC and BilD. The Bil system specifically conjugates a ubiquitin-like moiety (bilA) to the bacteriophage central tail fiber (CTF, or tip attachment protein J) via reactions involving E1 (bilD) and E2 (bilB). Modifies CTF of phage SECphi27 and SECphi4, which probably interferes with assembly of the phage tail. Also modifies T5 baseplate hub protein pb3 (gene D16), but not gp27 of phage T6 (Bil defends against T6). BilB probably accepts ubiquitin from the BilA-BilD (E1) complex and catalyzes its covalent attachment to target protein (CTF). Bil-encoding bacteria produce mostly defective phage SECphi27, many of which have phage assembly defects, including no tails. SECphi27 phage progeny produced in E.coli with the Bil system inject less DNA into naive host cells, maybe because the phage are less able to adsorb and inject their DNA into host cells. Expression of the Bil system in E.coli (strain MG1655) confers about 100-fold resistance to phage SECphi27, SECphi18, SECphi6, SECphi4 and T5, but not to SECphi17. When cells expressing the Bil system are infected by phage SECphi27 at low multiplicity of infection (0.03 MOI) the culture survives, at 3.0 MOI the culture collapses at the same time as cells without the Bil system. This Collimonas sp. (strain OK412) protein is Bacterial E2-like ubiquitin protein BilB.